The sequence spans 791 residues: MPVVKGGVWTNIEDEVLRAAVSKYGLNQWARVSSLLARKTPKQCKARWVEWLDPGIRKVEWSREEDEKLLHLAKLMPTQWRTIAPIVGRTATQCLERYQKLLDEAEARENDELGLGGPGTEASAPSADDVRRLRPGELDPDPESKPARPDTIDLDEDEKEMLSEARARLANTQGKKAKRKARERQLEESRRLAVLQKRRELKNAGINIKIVTRKPGEMDYNADIPFEKPAAPGFYDTTEEEARNERQREMFDPRKQQLANKRKGDQDEEAERKKRKNDKNSNSAAFAAAARAGQMQKIREAEQSSKRRALVLPTPQVSESEMEDIIKMGMAGDKASKMVGDEEGTKGLLGNYSAMVGGTPIRTPRAPPEEDHIANEIRNIRALTETQSSLLGGENTPLHDGGSSTGFDGIAPRRQQIVTPNPMATPFRQGNAVSATPVPGGAGPGATPLRTPRDHFSLNKEISGGLPIGSTPREIKMRENLARQSIRGRLAALPKPKETEWELEQLPSESAEPAGATEYPEEDSAVRDAREKEIRKRAAEAEHKRQTQVYQRSLPRPVVLDIDALMERASRVMDPITGLIAKEAALLVANDACKFATPGAKIEGKPRKLERLDDKYLEEARAAIASEASSGKLEEWSNEFDAKWSSSRQDTLPGLSNYLDDDEEDAYQQEQRIIGVFDNVQASLLATAEDGNKLEKKLALHYGGYQNRAKMLRAKITEAHTALEKSKHELDAFRTLQISEEAAISRRLEKLREEVAFVMRREREAQEQYRCRKDELDDLVASTGGMVNGWH.

HTH myb-type domains lie at 1-56 (MPVV…DPGI) and 57-106 (RKVE…DEAE). 2 DNA-binding regions (H-T-H motif) span residues 29–52 (WARVSSLLARKTPKQCKARWVEWL) and 80–102 (WRTIAPIVGRTATQCLERYQKLL). Disordered regions lie at residues 110–188 (NDEL…QLEE), 225–318 (PFEK…PQVS), 390–471 (LLGG…IGST), and 494–526 (PKPKETEWELEQLPSESAEPAGATEYPEEDSAV). 2 stretches are compositionally biased toward basic and acidic residues: residues 128 to 151 (DDVRRLRPGELDPDPESKPARPDT) and 240 to 255 (EEARNERQREMFDPRK). The segment covering 280 to 292 (NSNSAAFAAAARA) has biased composition (low complexity). 2 coiled-coil regions span residues 523 to 551 (DSAVRDAREKEIRKRAAEAEHKRQTQVYQ) and 705 to 779 (YQNR…LDDL).

The protein belongs to the CEF1 family. As to quaternary structure, associated with the spliceosome.

The protein resides in the cytoplasm. It is found in the nucleus. Involved in pre-mRNA splicing and cell cycle control. The chain is Pre-mRNA-splicing factor cef1 (cef1) from Emericella nidulans (strain FGSC A4 / ATCC 38163 / CBS 112.46 / NRRL 194 / M139) (Aspergillus nidulans).